A 1024-amino-acid chain; its full sequence is E3 ISG15--protein ligase HERC5 (1024 aa).

The segment covering 1 to 13 (MERRSRRKSRRNG) has biased composition (basic residues). Residues 1–28 (MERRSRRKSRRNGRSTAGKAAATQPAKS) are disordered. RCC1 repeat units follow at residues 96-155 (NMKI…ALSK), 156-208 (GGEL…ALSM), 209-260 (SGNI…LLTQ), 262-312 (GLLF…AYVS), and 314-364 (LGKV…LIMI). Residues 702–1024 (ENEDLRKELW…EAINNNRGFG (323 aa)) enclose the HECT domain. The active-site Glycyl thioester intermediate is cysteine 994.

As to quaternary structure, (Microbial infection) Interacts with human cytomegalovirus protein UL26; this interaction inhibits global protein ISGylation. (Microbial infection) Interacts with Kaposi's sarcoma-associated herpesvirus protein v-IRF1; this interaction inhibits global protein ISGylation. In terms of assembly, binds to CCNA1, CCNB1, CCND1 and CCNE1. Interacts with UBE2L6. Interacts with IRF3, this interaction is marginal in resting cells but enhanced upon viral infection. Interacts with influenza A virus NS1. ISGylated. Expressed in testis and to a lesser degree in brain, ovary and placenta. Found in most tissues at low levels.

The protein resides in the cytoplasm. The protein localises to the perinuclear region. Its function is as follows. Major E3 ligase for ISG15 conjugation. Acts as a positive regulator of innate antiviral response in cells induced by interferon. Functions as part of the ISGylation machinery that recognizes target proteins in a broad and relatively non-specific manner. Catalyzes ISGylation of IRF3 which results in sustained activation, it attenuates IRF3-PIN1 interaction, which antagonizes IRF3 ubiquitination and degradation, and boosts the antiviral response. Mediates ISGylation of the phosphatase PTEN leading to its degradation, thus alleviating its suppression of the PI3K-AKT signaling pathway and promoting the production of cytokines that facilitate bacterial clearance. Interferes with the function of key viral structural proteins such as ebolavirus structural protein VP40 or HIV-1 protein GAG. Catalyzes ISGylation of influenza A viral NS1 which attenuates virulence; ISGylated NS1 fails to form homodimers and thus to interact with its RNA targets. Catalyzes ISGylation of papillomavirus type 16 L1 protein which results in dominant-negative effect on virus infectivity. Physically associated with polyribosomes, broadly modifies newly synthesized proteins in a cotranslational manner. In an interferon-stimulated cell, newly translated viral proteins are primary targets of ISG15. Promotes parkin/PRKN ubiquitin E3 ligase activity by suppressing the intramolecular interaction that maintains its autoinhibited conformation. (Microbial infection) Functions as an E3 ligase for ISGylation of hepatitis B virus protein X leading to enhanced viral replication due to increased interferon resistance. In Homo sapiens (Human), this protein is E3 ISG15--protein ligase HERC5 (HERC5).